We begin with the raw amino-acid sequence, 596 residues long: Aspartate--tRNA(Asp/Asn) ligase (596 aa).

Glu-172 contacts L-aspartate. The segment at 196–199 is aspartate; it reads QLFK. Arg-218 contacts L-aspartate. Residues 218–220 and Gln-227 contribute to the ATP site; that span reads RDE. His-455 provides a ligand contact to L-aspartate. Position 489 (Glu-489) interacts with ATP. Arg-496 lines the L-aspartate pocket. ATP is bound at residue 541–544; the sequence is GLDR.

It belongs to the class-II aminoacyl-tRNA synthetase family. Type 1 subfamily. As to quaternary structure, homodimer.

The protein resides in the cytoplasm. It carries out the reaction tRNA(Asx) + L-aspartate + ATP = L-aspartyl-tRNA(Asx) + AMP + diphosphate. Functionally, aspartyl-tRNA synthetase with relaxed tRNA specificity since it is able to aspartylate not only its cognate tRNA(Asp) but also tRNA(Asn). Reaction proceeds in two steps: L-aspartate is first activated by ATP to form Asp-AMP and then transferred to the acceptor end of tRNA(Asp/Asn). This chain is Aspartate--tRNA(Asp/Asn) ligase, found in Bordetella avium (strain 197N).